A 349-amino-acid polypeptide reads, in one-letter code: Galanin receptor type 1 (349 aa).

At 1–36 the chain is on the extracellular side; that stretch reads MELAVGNLSEGNASWPEPPAPEPGPLFGIGVENFVT. Asparagine 7 and asparagine 12 each carry an N-linked (GlcNAc...) asparagine glycan. A helical transmembrane segment spans residues 37–57; that stretch reads LVVFGLIFALGVLGNSLVITV. Residues 58-70 are Cytoplasmic-facing; sequence LARSKPGKPRSTT. A helical transmembrane segment spans residues 71–91; it reads NLFILNLSIADLAYLLFCIPF. Topologically, residues 92–109 are extracellular; the sequence is QATVYALPTWVLGAFICK. Cysteine 108 and cysteine 187 are oxidised to a cystine. A helical transmembrane segment spans residues 110–131; that stretch reads FIHYFFTVSMLVSIFTLAAMSV. Topologically, residues 132-151 are cytoplasmic; that stretch reads DRYVAIVHSRRSSSLRVSRN. Residues 152–172 traverse the membrane as a helical segment; the sequence is ALLGVGCIWALSIAMASPVAY. Residues 173–200 lie on the Extracellular side of the membrane; sequence HQGLFHPRASNQTFCWEQWPDPRHKKAY. Asparagine 183 carries an N-linked (GlcNAc...) asparagine glycan. Residues 201-221 form a helical membrane-spanning segment; it reads VVCTFVFGYLLPLLLICFCYA. Residues 222–248 are Cytoplasmic-facing; it reads KVLNHLHKKLKNMSKKSEASKKKTAQT. A helical membrane pass occupies residues 249–269; the sequence is VLVVVVVFGISWLPHHIIHLW. Over 270–271 the chain is Extracellular; the sequence is AE. The chain crosses the membrane as a helical span at residues 272-292; that stretch reads FGVFPLTPASFLFRITAHCLA. Residues 293–349 lie on the Cytoplasmic side of the membrane; it reads YSNSSVNPIIYAFLSENFRKAYKQVFKCHIRKDSHLSDTKESKSRIDTPPSTNCTHV. Cysteine 320 carries the S-palmitoyl cysteine lipid modification.

The protein belongs to the G-protein coupled receptor 1 family. As to quaternary structure, interacts with GRP39 AND HTR1A. Post-translationally, palmitoylated on at least one of the three cysteine residues present in the C-terminal part.

Its subcellular location is the cell membrane. In terms of biological role, receptor for the hormone galanin. The activity of this receptor is mediated by G proteins that inhibit adenylate cyclase activity. This is Galanin receptor type 1 (GALR1) from Homo sapiens (Human).